The chain runs to 334 residues: DNA-directed RNA polymerase subunit alpha (334 aa).

An alpha N-terminal domain (alpha-NTD) region spans residues 1–231 (MQSNTFLTPR…EQLSVFADLK (231 aa)). Residues 245–334 (IDPVLLRPVD…GKKDTSHAAP (90 aa)) are alpha C-terminal domain (alpha-CTD).

The protein belongs to the RNA polymerase alpha chain family. As to quaternary structure, homodimer. The RNAP catalytic core consists of 2 alpha, 1 beta, 1 beta' and 1 omega subunit. When a sigma factor is associated with the core the holoenzyme is formed, which can initiate transcription.

It carries out the reaction RNA(n) + a ribonucleoside 5'-triphosphate = RNA(n+1) + diphosphate. Functionally, DNA-dependent RNA polymerase catalyzes the transcription of DNA into RNA using the four ribonucleoside triphosphates as substrates. The protein is DNA-directed RNA polymerase subunit alpha of Nitrosospira multiformis (strain ATCC 25196 / NCIMB 11849 / C 71).